Here is a 119-residue protein sequence, read N- to C-terminus: Large ribosomal subunit protein uL24 (119 aa).

It belongs to the universal ribosomal protein uL24 family. In terms of assembly, part of the 50S ribosomal subunit.

One of two assembly initiator proteins, it binds directly to the 5'-end of the 23S rRNA, where it nucleates assembly of the 50S subunit. Its function is as follows. Located at the polypeptide exit tunnel on the outside of the subunit. This chain is Large ribosomal subunit protein uL24, found in Methanococcus maripaludis (strain DSM 14266 / JCM 13030 / NBRC 101832 / S2 / LL).